A 930-amino-acid chain; its full sequence is Serine/threonine-protein kinase PknD (930 aa).

Residues 4–291 (YDIIRMIGKG…ALKADIEQHL (288 aa)) form the Protein kinase domain. Residues 10–18 (IGKGGMGEV) and Lys33 each bind ATP. The active-site Proton acceptor is the Asp138.

The protein belongs to the protein kinase superfamily. Ser/Thr protein kinase family. Post-translationally, autophosphorylated on serine and threonine residues.

The catalysed reaction is L-seryl-[protein] + ATP = O-phospho-L-seryl-[protein] + ADP + H(+). It catalyses the reaction L-threonyl-[protein] + ATP = O-phospho-L-threonyl-[protein] + ADP + H(+). Its function is as follows. Together with the serine/threonine kinase Pkn1, may play a role in the specific interactions with host proteins during intracellular growth. This Chlamydia caviae (strain ATCC VR-813 / DSM 19441 / 03DC25 / GPIC) (Chlamydophila caviae) protein is Serine/threonine-protein kinase PknD.